The following is a 615-amino-acid chain: uncharacterized protein (615 aa).

Composition is skewed to polar residues over residues 1–11 (MSETSSNSPAS), 41–55 (LSQN…SSKV), and 128–140 (TSGS…NAPP). Disordered regions lie at residues 1–61 (MSET…QALV) and 97–149 (HQNH…KASS). Residues S149 and S152 each carry the phosphoserine modification. The disordered stretch occupies residues 181-217 (LIHPEQTDRGLPYAPDEKFHNSGSLKLPKGASLEDLS). Phosphoserine is present on residues S219 and S275. Disordered regions lie at residues 266–481 (KPLA…KFTG), 493–565 (RLQK…KPSF), and 586–615 (GVET…TEEQ). The span at 272 to 283 (RQRSTADLTESD) shows a compositional bias: polar residues. Phosphothreonine is present on residues T276 and T297. Residues 312–323 (EAEKGFYTKDGE) are compositionally biased toward basic and acidic residues. A compositionally biased stretch (low complexity) spans 356–376 (PSLSSASQPSAASSSSSSEPS). Over residues 505-522 (PNKSKSPSGTKSPASGET) the composition is skewed to polar residues. T514 bears the Phosphothreonine mark. S516 carries the phosphoserine modification. Residues 586 to 599 (GVETRKEVEPKEEA) are compositionally biased toward basic and acidic residues. A compositionally biased stretch (acidic residues) spans 600–615 (VIPEEDVEVEVETEEQ).

This is an uncharacterized protein from Schizosaccharomyces pombe (strain 972 / ATCC 24843) (Fission yeast).